The following is a 467-amino-acid chain: MAKLRTLFDKIWDAHLVDVQDDGTCLIYIDRHMVHEVTSPQAFEGLEMSGRKVRHPELTLAVADHNVPTTDRSKGIENEESRIQVETLEANAKKFGVEYLRMDDIRQGVVHIVGPEQGFTLPGTTIVCGDSHTATHGAFGSLAFGIGTSEVEHVLATQTLVQKPAKNMRITVTGKPGPGVTAKDIVLAIIGKIGTAGGTGYVVEFAGEAIRDLSMEGRMTVCNMTIEAGARAGLVAPDEKTFAYIAGKPRSPKGAAFEAAVSYWKTLFTDEGAHFDAEVTLDASTLVPQITWGTSPEDVIAITGTVPNPADIKDEAKRKAVERSLDYMGLTAGMKATDIAIDVVFIGSCTNGRIEDFRAAAEIFKGRKVAASVQALIVPGSGLVKEQAEQEGLDKIFIEAGAEWREPGCSMCLAMNADQLKPGQRSASTSNRNFEGRQGRGGRTHLVSPAMAAAAAITGKLTDVRSL.

[4Fe-4S] cluster is bound by residues C349, C409, and C412. A disordered region spans residues P422–R443.

The protein belongs to the aconitase/IPM isomerase family. LeuC type 1 subfamily. Heterodimer of LeuC and LeuD. [4Fe-4S] cluster serves as cofactor.

The enzyme catalyses (2R,3S)-3-isopropylmalate = (2S)-2-isopropylmalate. It functions in the pathway amino-acid biosynthesis; L-leucine biosynthesis; L-leucine from 3-methyl-2-oxobutanoate: step 2/4. Functionally, catalyzes the isomerization between 2-isopropylmalate and 3-isopropylmalate, via the formation of 2-isopropylmaleate. This is 3-isopropylmalate dehydratase large subunit from Paramagnetospirillum magneticum (strain ATCC 700264 / AMB-1) (Magnetospirillum magneticum).